We begin with the raw amino-acid sequence, 481 residues long: Threonine synthase (481 aa).

N6-(pyridoxal phosphate)lysine is present on Lys118.

It belongs to the threonine synthase family. As to quaternary structure, monomer. Requires pyridoxal 5'-phosphate as cofactor.

The catalysed reaction is O-phospho-L-homoserine + H2O = L-threonine + phosphate. Its pathway is amino-acid biosynthesis; L-threonine biosynthesis; L-threonine from L-aspartate: step 5/5. Catalyzes the gamma-elimination of phosphate from L-phosphohomoserine and the beta-addition of water to produce L-threonine. In Corynebacterium glutamicum (strain ATCC 13032 / DSM 20300 / JCM 1318 / BCRC 11384 / CCUG 27702 / LMG 3730 / NBRC 12168 / NCIMB 10025 / NRRL B-2784 / 534), this protein is Threonine synthase (thrC).